Here is a 127-residue protein sequence, read N- to C-terminus: Glycine cleavage system H protein (127 aa).

One can recognise a Lipoyl-binding domain in the interval 24–105 (TALVGITDFA…YGEGWMVKMK (82 aa)). Residue K65 is modified to N6-lipoyllysine.

It belongs to the GcvH family. As to quaternary structure, the glycine cleavage system is composed of four proteins: P, T, L and H. (R)-lipoate is required as a cofactor.

In terms of biological role, the glycine cleavage system catalyzes the degradation of glycine. The H protein shuttles the methylamine group of glycine from the P protein to the T protein. This Chlorobium phaeovibrioides (strain DSM 265 / 1930) (Prosthecochloris vibrioformis (strain DSM 265)) protein is Glycine cleavage system H protein.